The following is a 279-amino-acid chain: Large ribosomal subunit protein mL46 (279 aa).

At lysine 230 the chain carries N6-acetyllysine.

The protein belongs to the mitochondrion-specific ribosomal protein mL46 family. In terms of assembly, component of the mitochondrial ribosome large subunit (39S) which comprises a 16S rRNA and about 50 distinct proteins.

Its subcellular location is the mitochondrion. This Pongo abelii (Sumatran orangutan) protein is Large ribosomal subunit protein mL46 (MRPL46).